The primary structure comprises 266 residues: Transcription factor BIP1 (266 aa).

The disordered stretch occupies residues 1 to 73 (MAMYMPSTAS…DREAQRAIRA (73 aa)). 2 stretches are compositionally biased toward polar residues: residues 7–22 (STASSTTHIRSPSGTP) and 47–56 (RSVSTLTPSQ). One can recognise a bZIP domain in the interval 54–95 (PSQLARKRANDREAQRAIRARTKEHIERLEREVEELKSKQNR). Residues 59 to 81 (RKRANDREAQRAIRARTKEHIER) form a basic motif region. A compositionally biased stretch (basic and acidic residues) spans 61 to 73 (RANDREAQRAIRA). Residues 82–89 (LEREVEEL) are leucine-zipper.

The protein belongs to the bZIP family. In terms of tissue distribution, expressed in appressoria.

It localises to the nucleus. Transcription factor that is required for infection of plants hosts. Is not implicated in the development of appressoria or the subsequent penetration of host leaves, but is necessary for the initial establishment of the fungus within plant cells by orchestrating the expression of a unique set of early invasion-related genes within appressoria, encoding secreted effectors, enzymes, secondary metabolism-related enzymes, and signaling membrane receptors. Controls the expression of targeted genes by interacting directly with a 5'-TGACTC-3' motif present in their promoters. The chain is Transcription factor BIP1 from Pyricularia oryzae (strain 70-15 / ATCC MYA-4617 / FGSC 8958) (Rice blast fungus).